Reading from the N-terminus, the 318-residue chain is COP9 signalosome complex subunit 6 (318 aa).

The 134-residue stretch at 32-165 (VALHPLVILN…VSVYESVIDI (134 aa)) folds into the MPN domain.

Belongs to the peptidase M67A family. CSN6 subfamily. In terms of assembly, component of the CSN complex, probably composed of cops1, cops2, cops3, cops4, cops5, cops6, cops7, cops8 and cops9.

The protein resides in the cytoplasm. It localises to the nucleus. Its function is as follows. Component of the COP9 signalosome complex (CSN), a complex involved in various cellular and developmental processes. The CSN complex is an essential regulator of the ubiquitin (Ubl) conjugation pathway by mediating the deneddylation of the cullin subunits of E3 ligase complexes, leading to modify the Ubl ligase activity. The chain is COP9 signalosome complex subunit 6 (cops6) from Xenopus laevis (African clawed frog).